The following is a 1192-amino-acid chain: Reticulon-4 (1192 aa).

The residue at position 1 (methionine 1) is an N-acetylmethionine. The disordered stretch occupies residues 1 to 204 (MEDLDQSPLV…ASEPVIRSSA (204 aa)). At 1-1018 (MEDLDQSPLV…LYWRDIKKTG (1018 aa)) the chain is on the cytoplasmic side. Phosphoserine occurs at positions 7 and 15. Residues 31–53 (PEDEEEEEEEEEEDEDEDLEELE) are compositionally biased toward acidic residues. Positions 65 to 77 (AAPVPTAPAAGAP) are enriched in low complexity. The span at 87–101 (PPAPRGPLPAAPPVA) shows a compositional bias: pro residues. A Phosphoserine modification is found at serine 107. A compositionally biased stretch (low complexity) spans 110–132 (PSPVSSTVPAPSPLSAAAVSPSK). Residues 141-150 (ARPPPPPPAS) are compositionally biased toward pro residues. Serine 152 carries the phosphoserine modification. A compositionally biased stretch (pro residues) spans 159-173 (WTPPAPAPAAPPSTP). Phosphoserine occurs at positions 181, 182, 184, 361, and 446. The disordered stretch occupies residues 427 to 458 (DSLEQTNHEKDSESSNDDTSFPSTPEGIKDRS). Position 450 is a phosphothreonine (threonine 450). Serine 511 bears the Phosphoserine mark. Residues 722–734 (AKVEQPVPDHSEL) are compositionally biased toward basic and acidic residues. The segment at 722-762 (AKVEQPVPDHSELVEDSSPDSEPVDLFSDDSIPDVPQKQDE) is disordered. Positions 735-753 (VEDSSPDSEPVDLFSDDSI) are enriched in acidic residues. Residue serine 749 is modified to Phosphoserine. Threonine 858 is modified (phosphothreonine). Phosphoserine occurs at positions 881 and 991. In terms of domain architecture, Reticulon spans 1005–1192 (VVDLLYWRDI…KIPGLKRKAE (188 aa)). A helical transmembrane segment spans residues 1019–1039 (VVFGASLFLLLSLTVFSIVSV). Residues 1040–1133 (TAYIALALLS…LMWVFTYVGA (94 aa)) are Lumenal-facing. Lysine 1104 carries the post-translational modification N6-acetyllysine. The helical transmembrane segment at 1134-1154 (LFNGLTLLILALISLFSVPVI) threads the bilayer. Residues 1155–1192 (YERHQAQIDHYLGLANKNVKDAMAKIQAKIPGLKRKAE) are Cytoplasmic-facing.

Binds to RTN4R. Interacts with ATL1. Interacts with TMEM170A. Interacts with RTN4IP1. In terms of assembly, interacts in trans with CNTNAP1. Interacts with REEP5. Interacts with synaptic plasticity regulator PANTS; the interaction results in enhanced RTN4-mediated inhibition of AMPA receptor clustering. Interacts with GPR50. As to quaternary structure, homodimer. Interacts with BAD/Bcl-xl and BCL2. Interact with RTN3. Interacts with NGBR. Interacts with SPTLC1. Interacts with GRAMD4. Interacts with CDH5. Interacts with BACE1 and BACE2. Interacts with REEP5. Interacts with RETREG3. Interacts with BACE1 and BACE2. Interacts with TMEM33. As to expression, isoform A: is specifically expressed in brain and testis and weakly in heart and skeletal muscle. Isoform B: widely expressed except for the liver. Highly expressed in endothelial cells and vascular smooth muscle cells, including blood vessels and mesenteric arteries. Isoform C: is expressed in brain, skeletal muscle and adipocytes. Isoform D is testis-specific.

It localises to the endoplasmic reticulum membrane. It is found in the cell membrane. The protein resides in the synapse. The protein localises to the cell junction. Functionally, required to induce the formation and stabilization of endoplasmic reticulum (ER) tubules. They regulate membrane morphogenesis in the ER by promoting tubular ER production. They influence nuclear envelope expansion, nuclear pore complex formation and proper localization of inner nuclear membrane proteins. However each isoform have specific functions mainly depending on their tissue expression specificities. Developmental neurite growth regulatory factor with a role as a negative regulator of axon-axon adhesion and growth, and as a facilitator of neurite branching. Regulates neurite fasciculation, branching and extension in the developing nervous system. Involved in down-regulation of growth, stabilization of wiring and restriction of plasticity in the adult CNS. Regulates the radial migration of cortical neurons via an RTN4R-LINGO1 containing receptor complex. Acts as a negative regulator of central nervous system angiogenesis. Inhibits spreading, migration and sprouting of primary brain microvascular endothelial cells (MVECs). Also induces the retraction of MVECs lamellipodia and filopodia in a ROCK pathway-dependent manner. Its function is as follows. Mainly function in endothelial cells and vascular smooth muscle cells, is also involved in immune system regulation. Modulator of vascular remodeling, promotes the migration of endothelial cells but inhibits the migration of vascular smooth muscle cells. Regulates endothelial sphingolipid biosynthesis with direct effects on vascular function and blood pressure. Inhibits serine palmitoyltransferase, SPTLC1, the rate-limiting enzyme of the novo sphingolipid biosynthetic pathway, thereby controlling production of endothelial sphingosine-1-phosphate (S1P). Required to promote macrophage homing and functions such as cytokine/chemokine gene expression involved in angiogenesis, arteriogenesis and tissue repair. Mediates ICAM1 induced transendothelial migration of leukocytes such as monocytes and neutrophils and acute inflammation. Necessary for immune responses triggered by nucleic acid sensing TLRs, such as TLR9, is required for proper TLR9 location to endolysosomes. Also involved in immune response to LPS. Plays a role in liver regeneration through the modulation of hepatocytes proliferation. Reduces the anti-apoptotic activity of Bcl-xl and Bcl-2. This is likely consecutive to their change in subcellular location, from the mitochondria to the endoplasmic reticulum, after binding and sequestration. With isoform C, inhibits BACE1 activity and amyloid precursor protein processing. In terms of biological role, regulates cardiomyocyte apoptosis upon hypoxic conditions. With isoform B, inhibits BACE1 activity and amyloid precursor protein processing. The protein is Reticulon-4 of Homo sapiens (Human).